Consider the following 64-residue polypeptide: Large ribosomal subunit protein uL29 (64 aa).

Belongs to the universal ribosomal protein uL29 family.

The chain is Large ribosomal subunit protein uL29 from Dichelobacter nodosus (strain VCS1703A).